The following is a 377-amino-acid chain: Erythronate-4-phosphate dehydrogenase (377 aa).

Residues Ser45 and Thr67 each contribute to the substrate site. Residues Asp147, 210–212 (ASR), and Asp236 contribute to the NAD(+) site. The active site involves Arg212. Glu241 is an active-site residue. Residue His258 is the Proton donor of the active site. Residue Gly261 participates in NAD(+) binding. Substrate is bound at residue Tyr262.

This sequence belongs to the D-isomer specific 2-hydroxyacid dehydrogenase family. PdxB subfamily. As to quaternary structure, homodimer.

It is found in the cytoplasm. It catalyses the reaction 4-phospho-D-erythronate + NAD(+) = (R)-3-hydroxy-2-oxo-4-phosphooxybutanoate + NADH + H(+). The protein operates within cofactor biosynthesis; pyridoxine 5'-phosphate biosynthesis; pyridoxine 5'-phosphate from D-erythrose 4-phosphate: step 2/5. Catalyzes the oxidation of erythronate-4-phosphate to 3-hydroxy-2-oxo-4-phosphonooxybutanoate. This chain is Erythronate-4-phosphate dehydrogenase, found in Aeromonas salmonicida (strain A449).